We begin with the raw amino-acid sequence, 436 residues long: Citrate synthase (436 aa).

Catalysis depends on residues H311 and D370.

It belongs to the citrate synthase family. As to quaternary structure, homohexamer.

The catalysed reaction is oxaloacetate + acetyl-CoA + H2O = citrate + CoA + H(+). Its pathway is carbohydrate metabolism; tricarboxylic acid cycle; isocitrate from oxaloacetate: step 1/2. Its activity is regulated as follows. Allosterically inhibited by NADH. This chain is Citrate synthase (gltA), found in Rickettsia prowazekii (strain Madrid E).